Reading from the N-terminus, the 268-residue chain is Tryptophan synthase alpha chain (268 aa).

Catalysis depends on proton acceptor residues Glu49 and Asp60.

The protein belongs to the TrpA family. In terms of assembly, tetramer of two alpha and two beta chains.

The catalysed reaction is (1S,2R)-1-C-(indol-3-yl)glycerol 3-phosphate + L-serine = D-glyceraldehyde 3-phosphate + L-tryptophan + H2O. The protein operates within amino-acid biosynthesis; L-tryptophan biosynthesis; L-tryptophan from chorismate: step 5/5. Functionally, the alpha subunit is responsible for the aldol cleavage of indoleglycerol phosphate to indole and glyceraldehyde 3-phosphate. This Aeromonas hydrophila subsp. hydrophila (strain ATCC 7966 / DSM 30187 / BCRC 13018 / CCUG 14551 / JCM 1027 / KCTC 2358 / NCIMB 9240 / NCTC 8049) protein is Tryptophan synthase alpha chain.